A 145-amino-acid chain; its full sequence is Aspartate 1-decarboxylase (145 aa).

The Schiff-base intermediate with substrate; via pyruvic acid role is filled by Ser-25. Ser-25 is subject to Pyruvic acid (Ser). Thr-57 contacts substrate. The Proton donor role is filled by Tyr-58. 73–75 (GAA) serves as a coordination point for substrate.

The protein belongs to the PanD family. As to quaternary structure, heterooctamer of four alpha and four beta subunits. Pyruvate serves as cofactor. Is synthesized initially as an inactive proenzyme, which is activated by self-cleavage at a specific serine bond to produce a beta-subunit with a hydroxyl group at its C-terminus and an alpha-subunit with a pyruvoyl group at its N-terminus.

It localises to the cytoplasm. It catalyses the reaction L-aspartate + H(+) = beta-alanine + CO2. It participates in cofactor biosynthesis; (R)-pantothenate biosynthesis; beta-alanine from L-aspartate: step 1/1. Catalyzes the pyruvoyl-dependent decarboxylation of aspartate to produce beta-alanine. This is Aspartate 1-decarboxylase from Micrococcus luteus (strain ATCC 4698 / DSM 20030 / JCM 1464 / CCM 169 / CCUG 5858 / IAM 1056 / NBRC 3333 / NCIMB 9278 / NCTC 2665 / VKM Ac-2230) (Micrococcus lysodeikticus).